The chain runs to 369 residues: GTPase Obg (369 aa).

In terms of domain architecture, Obg spans 1 to 159 (MKFIDEARIE…RMLKLELKVL (159 aa)). The interval 128-147 (LHFKSSTNRAPRQKTDGKPG) is disordered. The 175-residue stretch at 160 to 334 (ADVGLLGMPN…LCYAIYDYLA (175 aa)) folds into the OBG-type G domain. Residues 166–173 (GMPNAGKS), 191–195 (FTTLA), 213–216 (DIPG), 284–287 (NKLD), and 315–317 (SAL) each bind GTP. The Mg(2+) site is built by S173 and T193.

This sequence belongs to the TRAFAC class OBG-HflX-like GTPase superfamily. OBG GTPase family. Monomer. The cofactor is Mg(2+).

The protein localises to the cytoplasm. In terms of biological role, an essential GTPase which binds GTP, GDP and possibly (p)ppGpp with moderate affinity, with high nucleotide exchange rates and a fairly low GTP hydrolysis rate. Plays a role in control of the cell cycle, stress response, ribosome biogenesis and in those bacteria that undergo differentiation, in morphogenesis control. This Burkholderia multivorans (strain ATCC 17616 / 249) protein is GTPase Obg.